Consider the following 470-residue polypeptide: Uronate isomerase (470 aa).

This sequence belongs to the metallo-dependent hydrolases superfamily. Uronate isomerase family.

It catalyses the reaction D-glucuronate = D-fructuronate. The enzyme catalyses aldehydo-D-galacturonate = keto-D-tagaturonate. Its pathway is carbohydrate metabolism; pentose and glucuronate interconversion. This is Uronate isomerase from Escherichia fergusonii (strain ATCC 35469 / DSM 13698 / CCUG 18766 / IAM 14443 / JCM 21226 / LMG 7866 / NBRC 102419 / NCTC 12128 / CDC 0568-73).